Consider the following 626-residue polypeptide: MHLVSSLLVVGAAFQAVLGLPDPLHEKRHSDIIKRSVDSYIQTETPIAQKNLLCNIGASGCRASGAASGVVVASPSKSSPDYWYTWTRDAALVTKLIVDEFTNDYNTTLQNTIQAYAAAQAKLQGVSNPSGSLSNGAGLGEPKFMVDLQQFTGAWGRPQRDGPPLRAIALIGYGKWLVSNGYADTAKSIIWPIVKNDLAYTAQYWNNTGFDLWEEVNSSSFFTIAASHRALVEGSAFAKSVGSSCSACDAIAPQILCFQQSFWSNSGYIISNFVNYRSGKDINSVLTSIHNFDPAAGCDVNTFQPCSDRALANHKVVVDSMRFWGVNSGRTAGKAAAVGRYAEDVYYNGNPWYLATLAAAEQLYDAVYVWKKQGSITVTSTSLAFFKDLVPSVSTGTYSSSSSTYTAIINAVTTYADGFVDIVAQYTPSDGSLAEQFDKDSGAPLSATHLTWSYASFLSAAARRAGIVPPSWGAASANSLPGSCSASTVAGSYATATATSFPANLTPASTTVTPPTQTGCAADHEVLVTFNEKVTTSYGQTVKVVGSIAALGNWAPASGVTLSAKQYSSSNPLWSTTIALPQGTSFKYKYVVVNSDGSVKWENDPDRSYAVGTDCASTATLDDTWR.

The N-terminal stretch at 1-19 is a signal peptide; sequence MHLVSSLLVVGAAFQAVLG. A propeptide spanning residues 20 to 35 is cleaved from the precursor; sequence LPDPLHEKRHSDIIKR. Asn-106 carries N-linked (GlcNAc...) asparagine glycosylation. Trp-155 contributes to the substrate binding site. Asn-206 carries an N-linked (GlcNAc...) asparagine glycan. The active-site Proton acceptor is Asp-211. The active-site Proton donor is Glu-214. Residue Asn-217 is glycosylated (N-linked (GlcNAc...) asparagine). In terms of domain architecture, CBM20 spans 520 to 626; it reads CAADHEVLVT…STATLDDTWR (107 aa).

It belongs to the glycosyl hydrolase 15 family.

It carries out the reaction Hydrolysis of terminal (1-&gt;4)-linked alpha-D-glucose residues successively from non-reducing ends of the chains with release of beta-D-glucose.. The polypeptide is Glucoamylase (gla-1) (Neurospora crassa (strain ATCC 24698 / 74-OR23-1A / CBS 708.71 / DSM 1257 / FGSC 987)).